We begin with the raw amino-acid sequence, 89 residues long: Cell division topological specificity factor (89 aa).

The protein belongs to the MinE family.

Functionally, prevents the cell division inhibition by proteins MinC and MinD at internal division sites while permitting inhibition at polar sites. This ensures cell division at the proper site by restricting the formation of a division septum at the midpoint of the long axis of the cell. The polypeptide is Cell division topological specificity factor (Edwardsiella ictaluri (strain 93-146)).